The chain runs to 98 residues: NADH-ubiquinone oxidoreductase chain 4L (98 aa).

Transmembrane regions (helical) follow at residues Met1–Thr21, Ser29–Leu49, and Ile58–Leu78.

The protein belongs to the complex I subunit 4L family. As to quaternary structure, core subunit of respiratory chain NADH dehydrogenase (Complex I) which is composed of 45 different subunits.

Its subcellular location is the mitochondrion inner membrane. It catalyses the reaction a ubiquinone + NADH + 5 H(+)(in) = a ubiquinol + NAD(+) + 4 H(+)(out). Functionally, core subunit of the mitochondrial membrane respiratory chain NADH dehydrogenase (Complex I) which catalyzes electron transfer from NADH through the respiratory chain, using ubiquinone as an electron acceptor. Part of the enzyme membrane arm which is embedded in the lipid bilayer and involved in proton translocation. This is NADH-ubiquinone oxidoreductase chain 4L (MT-ND4L) from Presbytis melalophos (Mitred leaf monkey).